A 106-amino-acid chain; its full sequence is Immunoglobulin lambda constant 3 (106 aa).

The Ig-like domain occupies 7–101 (PSVTLFPPSS…EGSTVEKTVA (95 aa)). Cys28 and Cys87 are oxidised to a cystine.

In terms of assembly, immunoglobulins are composed of two identical heavy chains and two identical light chains; disulfide-linked.

It localises to the secreted. The protein localises to the cell membrane. Its function is as follows. Constant region of immunoglobulin light chains. Immunoglobulins, also known as antibodies, are membrane-bound or secreted glycoproteins produced by B lymphocytes. In the recognition phase of humoral immunity, the membrane-bound immunoglobulins serve as receptors which, upon binding of a specific antigen, trigger the clonal expansion and differentiation of B lymphocytes into immunoglobulins-secreting plasma cells. Secreted immunoglobulins mediate the effector phase of humoral immunity, which results in the elimination of bound antigens. The antigen binding site is formed by the variable domain of one heavy chain, together with that of its associated light chain. Thus, each immunoglobulin has two antigen binding sites with remarkable affinity for a particular antigen. The variable domains are assembled by a process called V-(D)-J rearrangement and can then be subjected to somatic hypermutations which, after exposure to antigen and selection, allow affinity maturation for a particular antigen. This is Immunoglobulin lambda constant 3 from Homo sapiens (Human).